The sequence spans 479 residues: Cruciferin PGCRURSE5 (479 aa).

The N-terminal stretch at M1–A23 is a signal peptide. 2 cysteine pairs are disulfide-bonded: C37–C70 and C113–C296. In terms of domain architecture, Cupin type-1 1 spans L42–Q241. Position 116 is a phosphothreonine (T116). Disordered regions lie at residues F117 to D144, R196 to N219, and Y271 to L291. Residues Q124 to G141 show a composition bias toward low complexity. Residues E302 to R451 form the Cupin type-1 2 domain. A phosphothreonine mark is found at T415 and T440.

The protein belongs to the 11S seed storage protein (globulins) family. In terms of assembly, hexamer; each subunit is composed of an acidic and a basic chain derived from a single precursor and linked by a disulfide bond.

Functionally, this is a seed storage protein. The sequence is that of Cruciferin PGCRURSE5 (CRURS) from Raphanus sativus (Radish).